A 175-amino-acid polypeptide reads, in one-letter code: Gamma-crystallin B (175 aa).

2 consecutive Beta/gamma crystallin 'Greek key' domains span residues 2-40 (GKIT…RVDS) and 41-83 (GCWM…RLIP). Residues 84–88 (QHSGT) form a connecting peptide region. Beta/gamma crystallin 'Greek key' domains are found at residues 89–129 (YRMR…NVME) and 130–172 (GCWV…RRVM).

It belongs to the beta/gamma-crystallin family.

In terms of biological role, crystallins are the dominant structural components of the vertebrate eye lens. This chain is Gamma-crystallin B (Crygb), found in Rattus norvegicus (Rat).